A 203-amino-acid chain; its full sequence is Putative 3-methyladenine DNA glycosylase (203 aa).

Belongs to the DNA glycosylase MPG family.

This chain is Putative 3-methyladenine DNA glycosylase, found in Clostridium botulinum (strain Loch Maree / Type A3).